The sequence spans 342 residues: Ribosomal RNA small subunit methyltransferase C (342 aa).

It belongs to the methyltransferase superfamily. RsmC family. In terms of assembly, monomer.

The protein localises to the cytoplasm. It catalyses the reaction guanosine(1207) in 16S rRNA + S-adenosyl-L-methionine = N(2)-methylguanosine(1207) in 16S rRNA + S-adenosyl-L-homocysteine + H(+). Its function is as follows. Specifically methylates the guanine in position 1207 of 16S rRNA in the 30S particle. In Salmonella choleraesuis (strain SC-B67), this protein is Ribosomal RNA small subunit methyltransferase C.